The sequence spans 255 residues: 3-deoxy-manno-octulosonate cytidylyltransferase (255 aa).

This sequence belongs to the KdsB family.

The protein resides in the cytoplasm. It catalyses the reaction 3-deoxy-alpha-D-manno-oct-2-ulosonate + CTP = CMP-3-deoxy-beta-D-manno-octulosonate + diphosphate. The protein operates within nucleotide-sugar biosynthesis; CMP-3-deoxy-D-manno-octulosonate biosynthesis; CMP-3-deoxy-D-manno-octulosonate from 3-deoxy-D-manno-octulosonate and CTP: step 1/1. Its pathway is bacterial outer membrane biogenesis; lipopolysaccharide biosynthesis. Activates KDO (a required 8-carbon sugar) for incorporation into bacterial lipopolysaccharide in Gram-negative bacteria. This Glaesserella parasuis serovar 5 (strain SH0165) (Haemophilus parasuis) protein is 3-deoxy-manno-octulosonate cytidylyltransferase.